The chain runs to 1325 residues: Protein suppressor of sable (1325 aa).

Disordered regions lie at residues 1–36 (MSVALADEPLIDLEEDLEDGEIDDDEEDEQQSSKIQ) and 74–326 (VCLQ…GGSN). Acidic residues predominate over residues 9 to 30 (PLIDLEEDLEDGEIDDDEEDEQ). Residues 119–131 (RSSNQDTSDQSLE) are compositionally biased toward polar residues. A highly charged region spans residues 138 to 327 (ATANPLLQST…GQEKMGGSNR (190 aa)). A compositionally biased stretch (basic residues) spans 149 to 158 (SSRRRKRKKE). Residues 149 to 179 (SSRRRKRKKEREREQKKDKEQQNRSRRDEND) are a coiled coil. Over residues 159-178 (REREQKKDKEQQNRSRRDEN) the composition is skewed to basic and acidic residues. The span at 236–246 (AGLGAGGGGGY) shows a compositional bias: gly residues. A coiled-coil region spans residues 276–296 (NEKEHQRGVNNRKRRDRDRLE). 2 C3H1-type zinc fingers span residues 330 to 357 (PRKLELCKFYLMDCCAKRDKCSYMHKEF) and 358 to 381 (PCKYYYLGMDCYAGDDCLFYHGEP). The stretch at 444 to 478 (KRQDHQMQQQQQQLQHQQLQQQQEQQQTQQQAAAD) forms a coiled coil. A compositionally biased stretch (basic and acidic residues) spans 499-509 (KRKSRWTEKMG). Disordered regions lie at residues 499-535 (KRKSRWTEKMGAKAAAGAAGSSERDSTSPDAKPLPPH), 588-622 (KAEDAKPQTQAELESSTPPSKRETEANNSNSKSNG), 639-695 (FSGN…PSVF), 710-745 (SARQLLPASATSPNQENAHLPGGDQSTHKSAPIGGG), 780-835 (AHSG…ALPP), 979-1058 (DLET…GGSK), 1143-1170 (EPNGNGAALGGGGDSGGGVGGGGGGGGV), and 1295-1325 (RGGHFPGGGSGGNGNGNNRNQRGGNHRNRNI). Phosphoserine is present on Ser524. Positions 594 to 606 (PQTQAELESSTPP) are enriched in polar residues. Position 604 is a phosphothreonine (Thr604). The segment covering 644 to 668 (PLDDDRDDDEQLIIDDGNDSTAEED) has biased composition (acidic residues). Position 663 is a phosphoserine (Ser663). Thr664 bears the Phosphothreonine mark. Residues 710–726 (SARQLLPASATSPNQEN) are compositionally biased toward polar residues. Residues 790 to 800 (SNENSNSNSHS) show a composition bias toward low complexity. A compositionally biased stretch (pro residues) spans 1003–1015 (SVPPPSMRVPPPN). Basic and acidic residues predominate over residues 1021–1033 (PTVRTDPRRDPRR). The segment covering 1042 to 1056 (GASTANTTAPNASGG) has biased composition (low complexity). 2 stretches are compositionally biased toward gly residues: residues 1149 to 1170 (AALGGGGDSGGGVGGGGGGGGV) and 1295 to 1309 (RGGHFPGGGSGGNGN).

It belongs to the suppressor of sable family. In terms of assembly, interacts with Wdr82.

It is found in the nucleus. The protein resides in the chromosome. In terms of biological role, RNA-binding protein that suppresses transcription of some RNAs. Together with Wdr82, part of a transcription termination checkpoint that promotes transcription termination of RNAs and their subsequent degradation by the nuclear exosome. Promotes transcription termination of aberrant RNAs, transcripts from genes containing a transposon inserted at their very 5' end or RNAs from heat-shock-inducible repetitive element. Binds RNA preferentially at a sequence that resembles a cryptic 5'-splice site. The sequence is that of Protein suppressor of sable from Drosophila melanogaster (Fruit fly).